The chain runs to 346 residues: MQLADLTQRLAALGAKPQHIGRITRAWLQGKPLDTGTKHQKTENFLPLSVRQELPAIAAELDALVRLRSEHPGADGSARLLVELADKQMVESVLLPRDGLCISSQVGCAVGCVFCMTGKSGLLRQLSSAEMVAQVALGRRFRPVKKVVFMGMGEPAHNLDNVLEAIDLLGTEGGIGHKNLVFSTVGDPRVFERLPQQRVRPALALSLHTTDAELRQRLLPKAPRIDPEQLMELGEAYARSIDYPIQYQWTLLKGINDSQQEMDNILRLFKGKFAVLNLIPYNSLDADNYQRPDGERIVQMVRYLHSRGVLTKVRNSAGQDIDGGCGQLRARAVDLVNTSRLRLSRH.

Glu-91 acts as the Proton acceptor in catalysis. The region spanning 94–320 (LLPRDGLCIS…TKVRNSAGQD (227 aa)) is the Radical SAM core domain. Cys-101 and Cys-325 are disulfide-bonded. Residues Cys-108, Cys-112, and Cys-115 each contribute to the [4Fe-4S] cluster site. Residues 153 to 154 (GE), Ser-183, 206 to 208 (SLH), and Asn-282 each bind S-adenosyl-L-methionine. Cys-325 acts as the S-methylcysteine intermediate in catalysis.

It belongs to the radical SAM superfamily. RlmN family. Requires [4Fe-4S] cluster as cofactor.

It localises to the cytoplasm. This is Probable RNA methyltransferase Pmen_2155 from Ectopseudomonas mendocina (strain ymp) (Pseudomonas mendocina).